The sequence spans 264 residues: Sirohydrochlorin cobaltochelatase (264 aa).

Positions 45, 84, 85, 88, 89, and 92 each coordinate Co-sirohydrochlorin. His-145 serves as the catalytic Proton acceptor. Co(2+) is bound by residues His-145 and Glu-175. Residues Leu-202, Val-203, and His-207 each contribute to the Co-sirohydrochlorin site. Residue His-207 participates in Co(2+) binding.

It belongs to the CbiK family. As to quaternary structure, homotrimer.

The enzyme catalyses Co-sirohydrochlorin + 2 H(+) = sirohydrochlorin + Co(2+). It catalyses the reaction Co-precorrin-2 + 3 H(+) = precorrin-2 + Co(2+). The protein operates within cofactor biosynthesis; adenosylcobalamin biosynthesis; cob(II)yrinate a,c-diamide from sirohydrochlorin (anaerobic route): step 1/10. Its function is as follows. Cobalt chelatase responsible for the insertion of cobalt during anaerobic cobalamin biosynthesis. Can catalyze the insertion of Co(2+) into either sirohydrochlorin or precorrin-2. It is not clear which is the natural substrate in Salmonella. The polypeptide is Sirohydrochlorin cobaltochelatase (Salmonella typhimurium (strain LT2 / SGSC1412 / ATCC 700720)).